Consider the following 290-residue polypeptide: Protein MGF 110-9L (290 aa).

3 helical membrane passes run 1 to 19 (MKVI…VIQN), 128 to 148 (VENI…MVYI), and 163 to 183 (LLIF…IIMN). Asparagine 242 and asparagine 267 each carry an N-linked (GlcNAc...) asparagine; by host glycan.

The protein belongs to the asfivirus MGF 110 family.

It is found in the host membrane. Plays a role in virus cell tropism, and may be required for efficient virus replication in macrophages. The protein is Protein MGF 110-9L of Ornithodoros (relapsing fever ticks).